A 359-amino-acid chain; its full sequence is MERRASETPEDGDPEEDTATALQRLVELTTSRVTPVRSLRDQYHLIRKLGSGSYGRVLLAQPHQGGPAVALKLLRRDLVLRSTFLREFCVGRCVSAHPGLLQTLAGPLQTPRYFAFAQEYAPCGDLSGMLQERGLPELLVKRVVAQLAGALDFLHSRGLVHADVKPDNVLVFDPVCSRVALGDLGLTRPEGSPTPAPPVPLPTAPPELCLLLPPDTLPLRPAVDSWGLGVLLFCAATACFPWDVALAPNPEFEAFAGWVTTKPQPPQPPPPWDQFAPPALALLQGLLDLDPETRSPPLAVLDFLGDDWGLQGNREGPGVLGSAVSYEDREEGGSSLEEWTDEGDDSKSGGRTGTDGGAP.

Residues 43 to 309 (YHLIRKLGSG…VLDFLGDDWG (267 aa)) enclose the Protein kinase domain. Residues 49–57 (LGSGSYGRV) and Lys72 contribute to the ATP site. Asp163 acts as the Proton acceptor in catalysis. The interval 314 to 359 (REGPGVLGSAVSYEDREEGGSSLEEWTDEGDDSKSGGRTGTDGGAP) is disordered. Residues 350 to 359 (GRTGTDGGAP) show a composition bias toward gly residues.

This sequence belongs to the protein kinase superfamily. Ser/Thr protein kinase family. STKL subfamily.

It carries out the reaction L-seryl-[protein] + ATP = O-phospho-L-seryl-[protein] + ADP + H(+). The enzyme catalyses L-threonyl-[protein] + ATP = O-phospho-L-threonyl-[protein] + ADP + H(+). This is an uncharacterized protein from Homo sapiens (Human).